We begin with the raw amino-acid sequence, 503 residues long: Arginyl-tRNA--protein transferase 1 (503 aa).

The protein belongs to the R-transferase family.

It is found in the cytoplasm. The enzyme catalyses an N-terminal L-alpha-aminoacyl-[protein] + L-arginyl-tRNA(Arg) = an N-terminal L-arginyl-L-aminoacyl-[protein] + tRNA(Arg) + H(+). Functionally, involved in the post-translational conjugation of arginine to the N-terminal aspartate or glutamate of a protein. This arginylation is required for degradation of the protein via the ubiquitin pathway. Does not arginylate cysteine residues. The chain is Arginyl-tRNA--protein transferase 1 (ATE1) from Saccharomyces cerevisiae (strain ATCC 204508 / S288c) (Baker's yeast).